We begin with the raw amino-acid sequence, 160 residues long: Zinc finger A20 and AN1 domain-containing stress-associated protein 6 (160 aa).

An A20-type zinc finger spans residues 18 to 52 (PEAPILCVNNCGFFGSRMTENMCSKCYRDTVKAKT). The Zn(2+) site is built by C24, C28, C40, and C43. Positions 73-94 (EVTDGGSGSVADGKQVMEEDTP) are disordered. Residues 95 to 141 (KPPSNRCLSCRKKVGLTGFKCRCGGTFCSMHRYADSHKCTFDYKQVG) form an AN1-type zinc finger. Residues C101, C104, C115, C117, C122, H125, H131, and C133 each contribute to the Zn(2+) site.

In terms of biological role, may be involved in environmental stress response. The protein is Zinc finger A20 and AN1 domain-containing stress-associated protein 6 (SAP6) of Oryza sativa subsp. japonica (Rice).